The chain runs to 145 residues: Aminoglycoside N(6')-acetyltransferase type 1 (145 aa).

Residues 1–145 (MNIKPASEAS…KVVYFSKKID (145 aa)) enclose the N-acetyltransferase domain. Positions 22, 65, and 78 each coordinate substrate. 80–82 (IYV) serves as a coordination point for acetyl-CoA. A substrate-binding site is contributed by Asp114. Asn119 contributes to the acetyl-CoA binding site. Glu135 provides a ligand contact to substrate.

In terms of assembly, homodimer.

It carries out the reaction kanamycin B + acetyl-CoA = N(6')-acetylkanamycin B + CoA + H(+). In terms of biological role, catalyzes the transfer of an acetyl group from acetyl-CoA to the 6'-amino group of aminoglycoside molecules conferring resistance to antibiotics containing the purpurosamine ring including amikacin, kanamycin, tobramycin and netilmicin. The chain is Aminoglycoside N(6')-acetyltransferase type 1 from Acinetobacter haemolyticus.